We begin with the raw amino-acid sequence, 2504 residues long: Fatty acid synthase (2504 aa).

Methionine 1 is modified (N-acetylmethionine). The 406-residue stretch at 1 to 406 (MEEVVIAGMS…GSNVHVILQP (406 aa)) folds into the Ketosynthase family 3 (KS3) domain. Residue lysine 59 is modified to N6-acetyllysine. At serine 63 the chain carries Phosphoserine. An N6-acetyllysine modification is found at lysine 70. Catalysis depends on cysteine 161, which acts as the For beta-ketoacyl synthase activity. The residue at position 207 (serine 207) is a Phosphoserine. The active-site For beta-ketoacyl synthase activity is the histidine 293. Lysine 298 bears the N6-acetyllysine mark. Histidine 331 functions as the For beta-ketoacyl synthase activity in the catalytic mechanism. An acyl and malonyl transferases region spans residues 429 to 817 (RTLEAVQDLL…INVNPNALFP (389 aa)). Lysine 528 carries the N6-acetyllysine modification. Serine 581 serves as the catalytic For malonyltransferase activity. An acyl-CoA-binding positions include 647–648 (DT) and phenylalanine 671. Lysine 673 is modified (N6-acetyllysine). Serine 725 is subject to Phosphoserine. Position 773 (arginine 773) interacts with an acyl-CoA. Position 790 is an N6-acetyllysine (lysine 790). Residues 844–967 (VPVAEDFPNG…VYLWEDPNSK (124 aa)) form an N-terminal hotdog fold region. The PKS/mFAS DH domain occupies 844-1104 (VPVAEDFPNG…ISRLQTTATS (261 aa)). Histidine 878 acts as the Proton acceptor; for dehydratase activity in catalysis. Residues 982–1104 (SVSRLTQGEV…ISRLQTTATS (123 aa)) are C-terminal hotdog fold. The residue at position 993 (lysine 993) is an N6-acetyllysine. The active-site Proton donor; for dehydratase activity is the aspartate 1032. Lysine 1071 and lysine 1276 each carry N6-acetyllysine. An S-nitrosocysteine modification is found at cysteine 1464. Serine 1577 and serine 1587 each carry phosphoserine. The tract at residues 1628-1856 (DVPSSWTLEE…VQVREEEPEA (229 aa)) is enoyl reductase. 1664–1681 (VLIHSGSGGVGQAAISIA) provides a ligand contact to NADP(+). At lysine 1697 the chain carries N6-(pyridoxal phosphate)lysine; alternate. The residue at position 1697 (lysine 1697) is an N6-acetyllysine; alternate. 2 positions are modified to N6-acetyllysine: lysine 1764 and lysine 1840. The tract at residues 1857-2111 (VLPGAQPTLI…FVLAEKKAVA (255 aa)) is beta-ketoacyl reductase. An NADP(+)-binding site is contributed by 1879–1894 (SYIITGGLGGFGLELA). Position 1988 is an N6-acetyllysine (lysine 1988). Cysteine 2084 is modified (S-nitrosocysteine). The Carrier domain maps to 2112-2192 (HGDGDTQRDL…EMSSKTDSAT (81 aa)). Serine 2150 is subject to O-(pantetheine 4'-phosphoryl)serine; alternate. A Phosphoserine; alternate modification is found at serine 2150. The tract at residues 2181–2205 (LQEMSSKTDSATDTTAPKSRSDTSL) is disordered. Positions 2185–2198 (SSKTDSATDTTAPK) are enriched in low complexity. Residues serine 2190 and serine 2229 each carry the phosphoserine modification. Residues 2201-2504 (SDTSLKQNQL…AEPRVSVREG (304 aa)) are thioesterase. The active-site For thioesterase activity is the serine 2301. Lysine 2384 carries the N6-acetyllysine modification. Residue lysine 2442 forms a Glycyl lysine isopeptide (Lys-Gly) (interchain with G-Cter in SUMO2) linkage. Histidine 2474 functions as the For thioesterase activity in the catalytic mechanism.

Homodimer which is arranged in a head to tail fashion. Interacts with CEACAM1; this interaction is insulin and phosphorylation-dependent; reduces fatty-acid synthase activity. S-nitrosylation of Fatty acid synthase at cysteine residues Cys-1464 or Cys-2084 is important for the enzyme dimerization. In adipocytes, S-nitrosylation of Fatty acid synthase occurs under physiological conditions and gradually increases during adipogenesis.

It is found in the cytoplasm. The protein resides in the melanosome. It catalyses the reaction acetyl-CoA + n malonyl-CoA + 2n NADPH + 2n H(+) = a long-chain fatty acid + (n+1) CoA + n CO2 + 2n NADP(+).. It carries out the reaction holo-[ACP] + acetyl-CoA = acetyl-[ACP] + CoA. The enzyme catalyses holo-[ACP] + malonyl-CoA = malonyl-[ACP] + CoA. The catalysed reaction is a fatty acyl-[ACP] + malonyl-[ACP] + H(+) = a 3-oxoacyl-[ACP] + holo-[ACP] + CO2. It catalyses the reaction a (3R)-hydroxyacyl-[ACP] + NADP(+) = a 3-oxoacyl-[ACP] + NADPH + H(+). It carries out the reaction a (3R)-hydroxyacyl-[ACP] = a (2E)-enoyl-[ACP] + H2O. The enzyme catalyses a 2,3-saturated acyl-[ACP] + NADP(+) = a (2E)-enoyl-[ACP] + NADPH + H(+). The catalysed reaction is hexadecanoyl-[ACP] + H2O = hexadecanoate + holo-[ACP] + H(+). It catalyses the reaction acetyl-[ACP] + malonyl-[ACP] + H(+) = 3-oxobutanoyl-[ACP] + holo-[ACP] + CO2. It carries out the reaction 3-oxobutanoyl-[ACP] + NADPH + H(+) = (3R)-hydroxybutanoyl-[ACP] + NADP(+). The enzyme catalyses (3R)-hydroxybutanoyl-[ACP] = (2E)-butenoyl-[ACP] + H2O. The catalysed reaction is (2E)-butenoyl-[ACP] + NADPH + H(+) = butanoyl-[ACP] + NADP(+). It catalyses the reaction butanoyl-[ACP] + malonyl-[ACP] + H(+) = 3-oxohexanoyl-[ACP] + holo-[ACP] + CO2. It carries out the reaction 3-oxohexanoyl-[ACP] + NADPH + H(+) = (3R)-hydroxyhexanoyl-[ACP] + NADP(+). The enzyme catalyses (3R)-hydroxyhexanoyl-[ACP] = (2E)-hexenoyl-[ACP] + H2O. The catalysed reaction is (2E)-hexenoyl-[ACP] + NADPH + H(+) = hexanoyl-[ACP] + NADP(+). It catalyses the reaction hexanoyl-[ACP] + malonyl-[ACP] + H(+) = 3-oxooctanoyl-[ACP] + holo-[ACP] + CO2. It carries out the reaction 3-oxooctanoyl-[ACP] + NADPH + H(+) = (3R)-hydroxyoctanoyl-[ACP] + NADP(+). The enzyme catalyses (3R)-hydroxyoctanoyl-[ACP] = (2E)-octenoyl-[ACP] + H2O. The catalysed reaction is (2E)-octenoyl-[ACP] + NADPH + H(+) = octanoyl-[ACP] + NADP(+). It catalyses the reaction octanoyl-[ACP] + malonyl-[ACP] + H(+) = 3-oxodecanoyl-[ACP] + holo-[ACP] + CO2. It carries out the reaction 3-oxodecanoyl-[ACP] + NADPH + H(+) = (3R)-hydroxydecanoyl-[ACP] + NADP(+). The enzyme catalyses (3R)-hydroxydecanoyl-[ACP] = (2E)-decenoyl-[ACP] + H2O. The catalysed reaction is (2E)-decenoyl-[ACP] + NADPH + H(+) = decanoyl-[ACP] + NADP(+). It catalyses the reaction decanoyl-[ACP] + malonyl-[ACP] + H(+) = 3-oxododecanoyl-[ACP] + holo-[ACP] + CO2. It carries out the reaction 3-oxododecanoyl-[ACP] + NADPH + H(+) = (3R)-hydroxydodecanoyl-[ACP] + NADP(+). The enzyme catalyses (3R)-hydroxydodecanoyl-[ACP] = (2E)-dodecenoyl-[ACP] + H2O. The catalysed reaction is (2E)-dodecenoyl-[ACP] + NADPH + H(+) = dodecanoyl-[ACP] + NADP(+). It catalyses the reaction dodecanoyl-[ACP] + malonyl-[ACP] + H(+) = 3-oxotetradecanoyl-[ACP] + holo-[ACP] + CO2. It carries out the reaction 3-oxotetradecanoyl-[ACP] + NADPH + H(+) = (3R)-hydroxytetradecanoyl-[ACP] + NADP(+). The enzyme catalyses (3R)-hydroxytetradecanoyl-[ACP] = (2E)-tetradecenoyl-[ACP] + H2O. The catalysed reaction is (2E)-tetradecenoyl-[ACP] + NADPH + H(+) = tetradecanoyl-[ACP] + NADP(+). It catalyses the reaction tetradecanoyl-[ACP] + malonyl-[ACP] + H(+) = 3-oxohexadecanoyl-[ACP] + holo-[ACP] + CO2. It carries out the reaction 3-oxohexadecanoyl-[ACP] + NADPH + H(+) = (3R)-hydroxyhexadecanoyl-[ACP] + NADP(+). The enzyme catalyses (3R)-hydroxyhexadecanoyl-[ACP] = (2E)-hexadecenoyl-[ACP] + H2O. The catalysed reaction is (2E)-hexadecenoyl-[ACP] + NADPH + H(+) = hexadecanoyl-[ACP] + NADP(+). It catalyses the reaction hexadecanoyl-[ACP] + malonyl-[ACP] + H(+) = 3-oxooctadecanoyl-[ACP] + holo-[ACP] + CO2. It carries out the reaction 3-oxooctadecanoyl-[ACP] + NADPH + H(+) = (3R)-hydroxyoctadecanoyl-[ACP] + NADP(+). The enzyme catalyses (3R)-hydroxyoctadecanoyl-[ACP] = (2E)-octadecenoyl-[ACP] + H2O. The catalysed reaction is (2E)-octadecenoyl-[ACP] + NADPH + H(+) = octadecanoyl-[ACP] + NADP(+). It catalyses the reaction tetradecanoyl-[ACP] + H2O = tetradecanoate + holo-[ACP] + H(+). Its pathway is lipid metabolism; fatty acid biosynthesis. Its function is as follows. Fatty acid synthetase is a multifunctional enzyme that catalyzes the de novo biosynthesis of long-chain saturated fatty acids starting from acetyl-CoA and malonyl-CoA in the presence of NADPH. This multifunctional protein contains 7 catalytic activities and a site for the binding of the prosthetic group 4'-phosphopantetheine of the acyl carrier protein ([ACP]) domain. The protein is Fatty acid synthase (Fasn) of Mus musculus (Mouse).